Consider the following 408-residue polypeptide: Imidazolonepropionase (408 aa).

2 residues coordinate Fe(3+): histidine 73 and histidine 75. Positions 73 and 75 each coordinate Zn(2+). 4-imidazolone-5-propanoate is bound by residues arginine 82, tyrosine 145, and histidine 178. Residue tyrosine 145 participates in N-formimidoyl-L-glutamate binding. Residue histidine 243 participates in Fe(3+) binding. Histidine 243 serves as a coordination point for Zn(2+). Residue glutamine 246 participates in 4-imidazolone-5-propanoate binding. Aspartate 318 provides a ligand contact to Fe(3+). Aspartate 318 lines the Zn(2+) pocket. Residues asparagine 320 and glycine 322 each coordinate N-formimidoyl-L-glutamate. Serine 323 serves as a coordination point for 4-imidazolone-5-propanoate.

This sequence belongs to the metallo-dependent hydrolases superfamily. HutI family. Zn(2+) serves as cofactor. Fe(3+) is required as a cofactor.

It is found in the cytoplasm. It carries out the reaction 4-imidazolone-5-propanoate + H2O = N-formimidoyl-L-glutamate. The protein operates within amino-acid degradation; L-histidine degradation into L-glutamate; N-formimidoyl-L-glutamate from L-histidine: step 3/3. Functionally, catalyzes the hydrolytic cleavage of the carbon-nitrogen bond in imidazolone-5-propanoate to yield N-formimidoyl-L-glutamate. It is the third step in the universal histidine degradation pathway. In Shewanella sediminis (strain HAW-EB3), this protein is Imidazolonepropionase.